A 505-amino-acid polypeptide reads, in one-letter code: L-carnitine/gamma-butyrobetaine antiporter (505 aa).

Transmembrane regions (helical) follow at residues 10 to 30 (IEPK…WLTV), 51 to 71 (WGWA…WLVF), 92 to 112 (IFMM…SIEI), 143 to 163 (GPLP…FFFV), 195 to 215 (FYLV…TPLV), 231 to 251 (LDAI…ACGL), 263 to 283 (SYLS…SFIM), 316 to 336 (WTVF…IFLA), 347 to 367 (LCFG…TVLG), 403 to 423 (LSTA…VTLI), 446 to 466 (LLVR…LLAL), and 475 to 495 (AIIA…LSFI).

The protein belongs to the BCCT transporter (TC 2.A.15) family. CaiT subfamily. Homotrimer.

It is found in the cell inner membrane. The enzyme catalyses 4-(trimethylamino)butanoate(in) + (R)-carnitine(out) = 4-(trimethylamino)butanoate(out) + (R)-carnitine(in). Its pathway is amine and polyamine metabolism; carnitine metabolism. Catalyzes the exchange of L-carnitine for gamma-butyrobetaine. The protein is L-carnitine/gamma-butyrobetaine antiporter of Salmonella choleraesuis (strain SC-B67).